Reading from the N-terminus, the 1413-residue chain is Alpha-latrocrustotoxin-Lt1a (1413 aa).

A propeptide spanning residues 1 to 28 is cleaved from the precursor; it reads VSIFIFHFSANILVRNSEMKGKRVISKR. The helix H8 is the probable transmembrane region of the tetrameric pore inserted in the target cell membrane stretch occupies residues 238–257; the sequence is ALFALFYGTQTFISIMFYLV. ANK repeat units lie at residues 457 to 490, 494 to 524, 528 to 557, 562 to 592, 596 to 625, 629 to 658, 664 to 694, 699 to 729, 733 to 762, 766 to 795, 799 to 828, 832 to 861, 866 to 895, 899 to 928, 965 to 995, 996 to 1026, 1031 to 1072, 1077 to 1106, 1109 to 1139, and 1143 to 1172; these read DIHR…QVGA, MGRK…LLNV, NGYT…DVNV, NELT…DVNA, AGFT…GINI, SGLT…KVKL, NGMT…DVNA, KNWT…DIST, QAIT…VVDQ, NGFT…NINA, DGST…NIKA, INQM…SLMN, RDEY…DVNE, DGNT…DFRL, RGKT…TLNE, DQCS…NPTA, NQVS…DINK, QQST…DPNK, RGDP…DVNT, and EQFT…DVNA. A propeptide spanning residues 1193–1413 is cleaved from the precursor; it reads RSLGRRFFRN…NRPTNVLQIK (221 aa).

This sequence belongs to the cationic peptide 01 (latrotoxin) family. 01 (alpha-latrocrustotoxin) subfamily. Homotetramer in membranes. As to expression, expressed by the venom gland.

Its subcellular location is the secreted. It localises to the target cell membrane. Its function is as follows. Crustacean-selective presynaptic neurotoxin that induces neurotransmitter exocytosis. May bind to crustacean neurexin-1 homolog, adhesion G protein-coupled receptor L1 homolog, and receptor-type tyrosine-protein phosphatase S homolog, and induces neurotransmitter exocytosis both by forming tetrameric pores in membranes and signaling via G protein-coupled receptor. This recombinant protein form channels in artificial membrane bilayers, that are stabilized by calcium ions and allow calcium flux at negative membrane potentials. This Latrodectus tredecimguttatus (Mediterranean black widow spider) protein is Alpha-latrocrustotoxin-Lt1a.